The sequence spans 189 residues: Apolipoprotein D (189 aa).

The N-terminal stretch at 1–20 (MATMLLLLATLAGLFTTTEG) is a signal peptide. Pyrrolidone carboxylic acid is present on Gln-21. 2 disulfides stabilise this stretch: Cys-28/Cys-134 and Cys-61/Cys-185. 2 N-linked (GlcNAc...) asparagine glycosylation sites follow: Asn-65 and Asn-98.

Belongs to the calycin superfamily. Lipocalin family. Homodimer. As to expression, expressed in liver, kidney, bladder, adrenal, cerebrum, duodenum, testis, lung, spleen, pancreas, heart and skin.

Its subcellular location is the secreted. APOD occurs in the macromolecular complex with lecithin-transport and binding of bilin. Appears to be able to transport a variety of ligands in a number of different contexts. This chain is Apolipoprotein D (Apod), found in Rattus norvegicus (Rat).